The primary structure comprises 560 residues: Bifunctional NAD(P)H-hydrate repair enzyme (560 aa).

The NAD(P)H-hydrate epimerase stretch occupies residues 1–241 (MLSRLSERCS…WMTAPERMRA (241 aa)). A YjeF N-terminal domain is found at 29–235 (LRDAEPAAAA…SLGLEDWMTA (207 aa)). The segment at 77-81 (NNGGD) is NADPHX 1; for epimerase activity. K(+) is bound by residues Asn-78 and Asp-145. An NADPHX 1; for epimerase activity region spans residues 149–155 (GTGICGP). Residues Tyr-160 and Asp-178 each contribute to the (6S)-NADPHX site. Ser-181 contributes to the K(+) binding site. One can recognise a YjeF C-terminal domain in the interval 249–547 (LDDVYEYFGI…HRVPLIVNAS (299 aa)). The ADP-dependent (S)-NAD(P)H-hydrate dehydratase stretch occupies residues 249 to 560 (LDDVYEYFGI…PATRQRSSGP (312 aa)). Gly-351 is a binding site for (6S)-NADPHX. The segment at 417-423 (HPGEAAR) is NADPHX 2; for dehydratase activity. Residues 454-458 (KGPGT) and 475-484 (NAGMASGGMG) each bind ADP. Asp-485 is a (6S)-NADPHX binding site.

The protein in the N-terminal section; belongs to the NnrE/AIBP family. In the C-terminal section; belongs to the NnrD/CARKD family. K(+) is required as a cofactor.

It catalyses the reaction (6S)-NADHX + ADP = AMP + phosphate + NADH + H(+). The enzyme catalyses (6S)-NADPHX + ADP = AMP + phosphate + NADPH + H(+). It carries out the reaction (6R)-NADHX = (6S)-NADHX. The catalysed reaction is (6R)-NADPHX = (6S)-NADPHX. Its function is as follows. Bifunctional enzyme that catalyzes the epimerization of the S- and R-forms of NAD(P)HX and the dehydration of the S-form of NAD(P)HX at the expense of ADP, which is converted to AMP. This allows the repair of both epimers of NAD(P)HX, a damaged form of NAD(P)H that is a result of enzymatic or heat-dependent hydration. The protein is Bifunctional NAD(P)H-hydrate repair enzyme of Leishmania infantum.